We begin with the raw amino-acid sequence, 31 residues long: Kappa-sparatoxin-Hv1c (31 aa).

3 disulfides stabilise this stretch: C2-C16, C9-C21, and C15-C25. Tryptophan amide is present on W31.

Expressed by the venom gland.

The protein resides in the secreted. Its function is as follows. Blocks transient outward voltage-gated potassium channels in rat ventricular myocytes (thus prolonging action-potential duration) and rat Kv4.2/KCNA4 channels expressed in Xenopus oocytes. Is also a weak blocker of calcium channels in rat cerebellar granule cells. The polypeptide is Kappa-sparatoxin-Hv1c (Heteropoda venatoria (Brown huntsman spider)).